Consider the following 101-residue polypeptide: Small ribosomal subunit protein uS14 (101 aa).

The protein belongs to the universal ribosomal protein uS14 family. In terms of assembly, part of the 30S ribosomal subunit. Contacts proteins S3 and S10.

Functionally, binds 16S rRNA, required for the assembly of 30S particles and may also be responsible for determining the conformation of the 16S rRNA at the A site. The sequence is that of Small ribosomal subunit protein uS14 from Chelativorans sp. (strain BNC1).